The sequence spans 427 residues: uncharacterized protein (427 aa).

Positions proline 135–asparagine 168 form a coiled coil.

This is an uncharacterized protein from Arabidopsis thaliana (Mouse-ear cress).